Reading from the N-terminus, the 143-residue chain is UPF0306 protein plu4501 (143 aa).

The protein belongs to the UPF0306 family.

This is UPF0306 protein plu4501 from Photorhabdus laumondii subsp. laumondii (strain DSM 15139 / CIP 105565 / TT01) (Photorhabdus luminescens subsp. laumondii).